The following is a 346-amino-acid chain: Methylthioribose-1-phosphate isomerase (346 aa).

Residues 45–47 (RGA), R87, and Q194 each bind substrate. D235 serves as the catalytic Proton donor. Substrate is bound at residue 245 to 246 (NK).

Belongs to the eIF-2B alpha/beta/delta subunits family. MtnA subfamily.

It carries out the reaction 5-(methylsulfanyl)-alpha-D-ribose 1-phosphate = 5-(methylsulfanyl)-D-ribulose 1-phosphate. The protein operates within amino-acid biosynthesis; L-methionine biosynthesis via salvage pathway; L-methionine from S-methyl-5-thio-alpha-D-ribose 1-phosphate: step 1/6. In terms of biological role, catalyzes the interconversion of methylthioribose-1-phosphate (MTR-1-P) into methylthioribulose-1-phosphate (MTRu-1-P). The chain is Methylthioribose-1-phosphate isomerase from Syntrophomonas wolfei subsp. wolfei (strain DSM 2245B / Goettingen).